The chain runs to 460 residues: tRNA modification GTPase MnmE (460 aa).

(6S)-5-formyl-5,6,7,8-tetrahydrofolate contacts are provided by Arg-25, Glu-87, and Arg-126. The TrmE-type G domain occupies 221–381 (GLKVAIVGRP…LETAIANLVQ (161 aa)). Asn-231 is a K(+) binding site. GTP is bound by residues 231 to 236 (NVGKSS), 250 to 256 (TDLPGTT), and 275 to 278 (DTAG). A Mg(2+)-binding site is contributed by Ser-235. Thr-250, Leu-252, and Thr-255 together coordinate K(+). Thr-256 serves as a coordination point for Mg(2+). Lys-460 contacts (6S)-5-formyl-5,6,7,8-tetrahydrofolate.

This sequence belongs to the TRAFAC class TrmE-Era-EngA-EngB-Septin-like GTPase superfamily. TrmE GTPase family. As to quaternary structure, homodimer. Heterotetramer of two MnmE and two MnmG subunits. Requires K(+) as cofactor.

It is found in the cytoplasm. Exhibits a very high intrinsic GTPase hydrolysis rate. Involved in the addition of a carboxymethylaminomethyl (cmnm) group at the wobble position (U34) of certain tRNAs, forming tRNA-cmnm(5)s(2)U34. In Picosynechococcus sp. (strain ATCC 27264 / PCC 7002 / PR-6) (Agmenellum quadruplicatum), this protein is tRNA modification GTPase MnmE.